The primary structure comprises 480 residues: EGF-like repeat and discoidin I-like domain-containing protein 3 (480 aa).

Positions 1–23 are cleaved as a signal peptide; sequence MKHLVAAWLLVGLSLGVPQFGKG. Residues 24–60 form the EGF-like 1 domain; the sequence is DICNPNPCENGGICLSGLADDSFSCECPEGFAGPNCS. Intrachain disulfides connect Cys-26–Cys-37, Cys-31–Cys-48, and Cys-50–Cys-59. Thr-73 is a glycosylation site (O-linked (GalNAc...) threonine). 2 consecutive EGF-like domains span residues 74–117 and 119–155; these read SAGP…IHCQ and NINE…RNCQ. 3 disulfides stabilise this stretch: Cys-78–Cys-89, Cys-83–Cys-105, and Cys-107–Cys-116. O-linked (Fuc...) threonine glycosylation is present at Thr-88. The Cell attachment site motif lies at 96–98; it reads RGD. The Ca(2+) site is built by Asn-119, Ile-120, and Glu-122. Cystine bridges form between Cys-123-Cys-134, Cys-128-Cys-143, Cys-145-Cys-154, Cys-158-Cys-314, Cys-301-Cys-305, and Cys-319-Cys-476. Ca(2+)-binding residues include Asp-136 and Leu-137. The N-linked (GlcNAc...) asparagine glycan is linked to Asn-140. F5/8 type C domains lie at 158-314 and 319-476; these read CSGP…LLGC and CSEP…LLGC.

In terms of tissue distribution, expressed in angioblasts and early endothelial cells. By embryonic day 13.5, also expressed in a restricted group of non-endothelial cells including chondrocytes and retinal neurons.

The protein localises to the secreted. Promotes adhesion of endothelial cells through interaction with the alpha-v/beta-3 integrin receptor. Inhibits formation of vascular-like structures. May be involved in regulation of vascular morphogenesis of remodeling in embryonic development. In Mus musculus (Mouse), this protein is EGF-like repeat and discoidin I-like domain-containing protein 3 (Edil3).